The chain runs to 137 residues: Large ribosomal subunit protein uL16 (137 aa).

It belongs to the universal ribosomal protein uL16 family. In terms of assembly, part of the 50S ribosomal subunit.

In terms of biological role, binds 23S rRNA and is also seen to make contacts with the A and possibly P site tRNAs. The chain is Large ribosomal subunit protein uL16 from Mesorhizobium japonicum (strain LMG 29417 / CECT 9101 / MAFF 303099) (Mesorhizobium loti (strain MAFF 303099)).